The sequence spans 337 residues: DNA-directed RNA polymerase subunit alpha (337 aa).

An alpha N-terminal domain (alpha-NTD) region spans residues 1–231 (MRNITISAYT…KQLSVFDKIT (231 aa)). Positions 248–337 (NTKLLQNITD…IAELKAQNEG (90 aa)) are alpha C-terminal domain (alpha-CTD).

This sequence belongs to the RNA polymerase alpha chain family. As to quaternary structure, homodimer. The RNAP catalytic core consists of 2 alpha, 1 beta, 1 beta' and 1 omega subunit. When a sigma factor is associated with the core the holoenzyme is formed, which can initiate transcription.

The enzyme catalyses RNA(n) + a ribonucleoside 5'-triphosphate = RNA(n+1) + diphosphate. In terms of biological role, DNA-dependent RNA polymerase catalyzes the transcription of DNA into RNA using the four ribonucleoside triphosphates as substrates. The sequence is that of DNA-directed RNA polymerase subunit alpha from Campylobacter jejuni subsp. doylei (strain ATCC BAA-1458 / RM4099 / 269.97).